The primary structure comprises 237 residues: Purine nucleoside phosphorylase DeoD-type (237 aa).

H4 is a binding site for a purine D-ribonucleoside. Residues G20, R24, R43, and 87–90 (RVGS) each bind phosphate. A purine D-ribonucleoside-binding positions include 179-181 (EME) and 203-204 (SD). Residue D204 is the Proton donor of the active site.

It belongs to the PNP/UDP phosphorylase family. Homohexamer; trimer of homodimers.

It catalyses the reaction a purine D-ribonucleoside + phosphate = a purine nucleobase + alpha-D-ribose 1-phosphate. The catalysed reaction is a purine 2'-deoxy-D-ribonucleoside + phosphate = a purine nucleobase + 2-deoxy-alpha-D-ribose 1-phosphate. Its function is as follows. Catalyzes the reversible phosphorolytic breakdown of the N-glycosidic bond in the beta-(deoxy)ribonucleoside molecules, with the formation of the corresponding free purine bases and pentose-1-phosphate. This Dichelobacter nodosus (strain VCS1703A) protein is Purine nucleoside phosphorylase DeoD-type.